The sequence spans 64 residues: Large ribosomal subunit protein bL28 (64 aa).

The segment at 1 to 26 (MARRDQLTGKGPLSGNTRSHAMNHSK) is disordered.

It belongs to the bacterial ribosomal protein bL28 family.

The sequence is that of Large ribosomal subunit protein bL28 from Ureaplasma urealyticum serovar 10 (strain ATCC 33699 / Western).